The primary structure comprises 189 residues: Thymidylate kinase (189 aa).

7-14 (GIDTAGKS) serves as a coordination point for ATP.

Belongs to the thymidylate kinase family.

It catalyses the reaction dTMP + ATP = dTDP + ADP. In terms of biological role, phosphorylation of dTMP to form dTDP in both de novo and salvage pathways of dTTP synthesis. The polypeptide is Thymidylate kinase (Aliarcobacter butzleri (strain RM4018) (Arcobacter butzleri)).